The sequence spans 77 residues: MSGPITLPTLRMMLDYVDTPVLVKLKSGLRIKGVLKTYDQHLNIILGDAEEIGETSIRRLGLTLVRGDSVVVITPAA.

Positions P8–A77 constitute a Sm domain.

This sequence belongs to the snRNP Sm proteins family.

The polypeptide is Putative snRNP Sm-like protein (Aeropyrum pernix (strain ATCC 700893 / DSM 11879 / JCM 9820 / NBRC 100138 / K1)).